The following is a 175-amino-acid chain: Small ribosomal subunit protein uS5 (175 aa).

Positions 19 to 82 constitute an S5 DRBM domain; sequence WVDRLVSVNR…DDAKKNVIRV (64 aa).

It belongs to the universal ribosomal protein uS5 family. Part of the 30S ribosomal subunit. Contacts proteins S4 and S8.

Its function is as follows. With S4 and S12 plays an important role in translational accuracy. Functionally, located at the back of the 30S subunit body where it stabilizes the conformation of the head with respect to the body. In Salinibacter ruber (strain DSM 13855 / M31), this protein is Small ribosomal subunit protein uS5.